Here is a 158-residue protein sequence, read N- to C-terminus: 2-C-methyl-D-erythritol 2,4-cyclodiphosphate synthase (158 aa).

The a divalent metal cation site is built by Asp8 and His10. 4-CDP-2-C-methyl-D-erythritol 2-phosphate contacts are provided by residues 8–10 (DAH) and 34–35 (HS). A divalent metal cation is bound at residue His42. Residues 56–58 (DIG), 132–135 (TTTE), and Arg142 contribute to the 4-CDP-2-C-methyl-D-erythritol 2-phosphate site.

The protein belongs to the IspF family. As to quaternary structure, homotrimer. A divalent metal cation is required as a cofactor.

It carries out the reaction 4-CDP-2-C-methyl-D-erythritol 2-phosphate = 2-C-methyl-D-erythritol 2,4-cyclic diphosphate + CMP. It participates in isoprenoid biosynthesis; isopentenyl diphosphate biosynthesis via DXP pathway; isopentenyl diphosphate from 1-deoxy-D-xylulose 5-phosphate: step 4/6. Its function is as follows. Involved in the biosynthesis of isopentenyl diphosphate (IPP) and dimethylallyl diphosphate (DMAPP), two major building blocks of isoprenoid compounds. Catalyzes the conversion of 4-diphosphocytidyl-2-C-methyl-D-erythritol 2-phosphate (CDP-ME2P) to 2-C-methyl-D-erythritol 2,4-cyclodiphosphate (ME-CPP) with a corresponding release of cytidine 5-monophosphate (CMP). This is 2-C-methyl-D-erythritol 2,4-cyclodiphosphate synthase from Nitrosococcus oceani (strain ATCC 19707 / BCRC 17464 / JCM 30415 / NCIMB 11848 / C-107).